Consider the following 526-residue polypeptide: Cholesterol side-chain cleavage enzyme, mitochondrial (526 aa).

A mitochondrion-targeting transit peptide spans 1–36; that stretch reads MLAKGLCLRSVLVKSCQPFLSPVWQGPGLATGNGAG. Position 459 (Cys-459) interacts with heme.

The protein belongs to the cytochrome P450 family. Interacts with FDX1/adrenodoxin. The cofactor is heme. As to expression, expressed in the kidney where it localizes to the distal convoluted tubule and the thick ascending limb of the loop of Henle (at protein level). In the ovary, highly expressed in interstitial cells (at protein level). Also expressed in adrenal gland and testis.

Its subcellular location is the mitochondrion inner membrane. The enzyme catalyses 6 reduced [adrenodoxin] + cholesterol + 3 O2 + 6 H(+) = 4-methylpentanal + pregnenolone + 6 oxidized [adrenodoxin] + 4 H2O. It carries out the reaction 2 reduced [adrenodoxin] + cholesterol + O2 + 2 H(+) = (22R)-hydroxycholesterol + 2 oxidized [adrenodoxin] + H2O. It catalyses the reaction (22R)-hydroxycholesterol + 2 reduced [adrenodoxin] + O2 + 2 H(+) = (20R,22R)-20,22-dihydroxycholesterol + 2 oxidized [adrenodoxin] + H2O. The catalysed reaction is (20R,22R)-20,22-dihydroxycholesterol + 2 reduced [adrenodoxin] + O2 + 2 H(+) = 4-methylpentanal + pregnenolone + 2 oxidized [adrenodoxin] + 2 H2O. The protein operates within lipid metabolism; C21-steroid hormone metabolism. It participates in steroid metabolism; cholesterol metabolism. Functionally, a cytochrome P450 monooxygenase that catalyzes the side-chain hydroxylation and cleavage of cholesterol to pregnenolone, the precursor of most steroid hormones. Catalyzes three sequential oxidation reactions of cholesterol, namely the hydroxylation at C22 followed with the hydroxylation at C20 to yield 20R,22R-hydroxycholesterol that is further cleaved between C20 and C22 to yield the C21-steroid pregnenolone and 4-methylpentanal. Mechanistically, uses molecular oxygen inserting one oxygen atom into a substrate and reducing the second into a water molecule. Two electrons are provided by NADPH via a two-protein mitochondrial transfer system comprising flavoprotein FDXR (adrenodoxin/ferredoxin reductase) and nonheme iron-sulfur protein FDX1 or FDX2 (adrenodoxin/ferredoxin). The polypeptide is Cholesterol side-chain cleavage enzyme, mitochondrial (Rattus norvegicus (Rat)).